We begin with the raw amino-acid sequence, 252 residues long: Hydroxyacylglutathione hydrolase (252 aa).

Positions 54, 56, 58, 59, 111, 130, and 170 each coordinate Zn(2+).

Belongs to the metallo-beta-lactamase superfamily. Glyoxalase II family. In terms of assembly, monomer. Zn(2+) serves as cofactor.

The catalysed reaction is an S-(2-hydroxyacyl)glutathione + H2O = a 2-hydroxy carboxylate + glutathione + H(+). It participates in secondary metabolite metabolism; methylglyoxal degradation; (R)-lactate from methylglyoxal: step 2/2. Functionally, thiolesterase that catalyzes the hydrolysis of S-D-lactoyl-glutathione to form glutathione and D-lactic acid. The protein is Hydroxyacylglutathione hydrolase of Francisella tularensis subsp. novicida (strain U112).